We begin with the raw amino-acid sequence, 125 residues long: Immunoglobulin heavy variable 4-39 (125 aa).

Residues 1-26 (MDLMCKKMKHLWFFLLLVAAPRWVLS) form the signal peptide. Positions 27–51 (QLQLQESGPGLVKPSETLSLTCTVS) are framework-1. Residues 27-125 (QLQLQESGPG…ADTAVYYCAR (99 aa)) form the Ig-like domain. Residues cysteine 48 and cysteine 123 are joined by a disulfide bond. Positions 52–61 (GGSISSSSYY) are complementarity-determining-1. A framework-2 region spans residues 62-78 (WGWIRQPPGKGLEWIGS). The tract at residues 79–85 (IYYSGST) is complementarity-determining-2. The tract at residues 86–123 (YYNPSLKSRVTISVDTSKNQFSLKLSSVTAADTAVYYC) is framework-3. The tract at residues 124-125 (AR) is complementarity-determining-3.

In terms of assembly, immunoglobulins are composed of two identical heavy chains and two identical light chains; disulfide-linked.

The protein resides in the secreted. It localises to the cell membrane. Functionally, v region of the variable domain of immunoglobulin heavy chains that participates in the antigen recognition. Immunoglobulins, also known as antibodies, are membrane-bound or secreted glycoproteins produced by B lymphocytes. In the recognition phase of humoral immunity, the membrane-bound immunoglobulins serve as receptors which, upon binding of a specific antigen, trigger the clonal expansion and differentiation of B lymphocytes into immunoglobulins-secreting plasma cells. Secreted immunoglobulins mediate the effector phase of humoral immunity, which results in the elimination of bound antigens. The antigen binding site is formed by the variable domain of one heavy chain, together with that of its associated light chain. Thus, each immunoglobulin has two antigen binding sites with remarkable affinity for a particular antigen. The variable domains are assembled by a process called V-(D)-J rearrangement and can then be subjected to somatic hypermutations which, after exposure to antigen and selection, allow affinity maturation for a particular antigen. In Homo sapiens (Human), this protein is Immunoglobulin heavy variable 4-39.